A 183-amino-acid polypeptide reads, in one-letter code: Photosystem I assembly protein Ycf4 (183 aa).

2 helical membrane passes run 17-39 (NYLL…FLSY) and 59-81 (FIPQ…IYIY).

The protein belongs to the Ycf4 family.

It localises to the plastid. The protein resides in the chloroplast thylakoid membrane. Its function is as follows. Seems to be required for the assembly of the photosystem I complex. The chain is Photosystem I assembly protein Ycf4 from Cyanidium caldarium (Red alga).